Consider the following 140-residue polypeptide: ATP synthase epsilon chain (140 aa).

This sequence belongs to the ATPase epsilon chain family. In terms of assembly, F-type ATPases have 2 components, CF(1) - the catalytic core - and CF(0) - the membrane proton channel. CF(1) has five subunits: alpha(3), beta(3), gamma(1), delta(1), epsilon(1). CF(0) has three main subunits: a, b and c.

The protein localises to the cell membrane. In terms of biological role, produces ATP from ADP in the presence of a proton gradient across the membrane. This Baumannia cicadellinicola subsp. Homalodisca coagulata protein is ATP synthase epsilon chain.